A 149-amino-acid chain; its full sequence is Transcriptional repressor NrdR (149 aa).

A zinc finger lies at 3 to 34; sequence CPFCSATDTKVIDSRLVADGHQVRRRRECVQC. Positions 49–139 constitute an ATP-cone domain; it reads PRVVKQDGSR…VYRAFEDVSE (91 aa).

It belongs to the NrdR family. The cofactor is Zn(2+).

Functionally, negatively regulates transcription of bacterial ribonucleotide reductase nrd genes and operons by binding to NrdR-boxes. The chain is Transcriptional repressor NrdR from Shewanella halifaxensis (strain HAW-EB4).